The sequence spans 170 residues: Adenine phosphoribosyltransferase (170 aa).

It belongs to the purine/pyrimidine phosphoribosyltransferase family. In terms of assembly, homodimer.

Its subcellular location is the cytoplasm. It catalyses the reaction AMP + diphosphate = 5-phospho-alpha-D-ribose 1-diphosphate + adenine. It participates in purine metabolism; AMP biosynthesis via salvage pathway; AMP from adenine: step 1/1. Its function is as follows. Catalyzes a salvage reaction resulting in the formation of AMP, that is energically less costly than de novo synthesis. In Lactococcus lactis subsp. cremoris (strain SK11), this protein is Adenine phosphoribosyltransferase.